Consider the following 214-residue polypeptide: Probable GTP-binding protein EngB (214 aa).

The 184-residue stretch at 31–214 folds into the EngB-type G domain; that stretch reads GPPEIAFAGR…LRAAILQTIA (184 aa). Residues 39 to 46, 66 to 70, 93 to 96, 160 to 163, and 194 to 196 contribute to the GTP site; these read GRSNVGKS, GRTQE, DMPG, TKSD, and TSS. The Mg(2+) site is built by Ser46 and Thr68.

Belongs to the TRAFAC class TrmE-Era-EngA-EngB-Septin-like GTPase superfamily. EngB GTPase family. The cofactor is Mg(2+).

Necessary for normal cell division and for the maintenance of normal septation. The polypeptide is Probable GTP-binding protein EngB (Bartonella tribocorum (strain CIP 105476 / IBS 506)).